The primary structure comprises 199 residues: Female-specific protein transformer (199 aa).

2 disordered regions span residues 1-121 (MDAD…RTPR) and 178-199 (YRAG…QAPN). Over residues 20 to 37 (REKMPYFADEVRERDRVR) the composition is skewed to basic and acidic residues. Basic residues-rich tracts occupy residues 56–69 (RRSR…RSRT), 77–92 (CQRR…RSGS), and 102–119 (SRRR…RSRT).

Its subcellular location is the nucleus speckle. Member of the regulatory pathway controlling female somatic sexual differentiation, regulated by Sxl. Activates dsx female-specific splicing by promoting the formation of a splicing enhancer complex which consists of tra, tra2 and sr proteins. The polypeptide is Female-specific protein transformer (tra) (Drosophila virilis (Fruit fly)).